The sequence spans 263 residues: MRVIIESDYQALSQWAANYVASKINAANPTPEKPFVLGCPTGSSPLGMYKALIELNKQGKVSFQNVVTFNMDEYVGLPEDHPESYHTFMWKNFFNHIDIKKENVHILNGNAEDLEAECANYEKQIAEIGGIDLFMGGIGPDGHIAFNEPGSSLSSRTRIKTLTTDTIIANSRFFDNDVNKVPKTALTVGVGTVLSAKEVLIICNGHNKARALQHAVEGGITQMWTISALQMHQHGIIVCDEAATDELKVGTYKYFKDIEKANL.

The active-site Proton acceptor; for enolization step is D72. The For ring-opening step role is filled by D141. Residue H143 is the Proton acceptor; for ring-opening step of the active site. The For ring-opening step role is filled by E148.

Belongs to the glucosamine/galactosamine-6-phosphate isomerase family. NagB subfamily.

The catalysed reaction is alpha-D-glucosamine 6-phosphate + H2O = beta-D-fructose 6-phosphate + NH4(+). The protein operates within amino-sugar metabolism; N-acetylneuraminate degradation; D-fructose 6-phosphate from N-acetylneuraminate: step 5/5. Its activity is regulated as follows. Allosterically activated by N-acetylglucosamine 6-phosphate (GlcNAc6P). Functionally, catalyzes the reversible isomerization-deamination of glucosamine 6-phosphate (GlcN6P) to form fructose 6-phosphate (Fru6P) and ammonium ion. This Phocaeicola vulgatus (strain ATCC 8482 / DSM 1447 / JCM 5826 / CCUG 4940 / NBRC 14291 / NCTC 11154) (Bacteroides vulgatus) protein is Glucosamine-6-phosphate deaminase.